The following is a 163-amino-acid chain: Phosphopantetheine adenylyltransferase (163 aa).

Thr-10 contributes to the substrate binding site. Residues 10–11 (TF) and His-18 contribute to the ATP site. The substrate site is built by Lys-42, Leu-74, and Arg-88. Residues 89-91 (GLR), Glu-99, and 124-130 (NSFISST) contribute to the ATP site.

This sequence belongs to the bacterial CoaD family. Homohexamer. Mg(2+) serves as cofactor.

The protein localises to the cytoplasm. It catalyses the reaction (R)-4'-phosphopantetheine + ATP + H(+) = 3'-dephospho-CoA + diphosphate. Its pathway is cofactor biosynthesis; coenzyme A biosynthesis; CoA from (R)-pantothenate: step 4/5. In terms of biological role, reversibly transfers an adenylyl group from ATP to 4'-phosphopantetheine, yielding dephospho-CoA (dPCoA) and pyrophosphate. This is Phosphopantetheine adenylyltransferase from Shewanella baltica (strain OS155 / ATCC BAA-1091).